Here is a 116-residue protein sequence, read N- to C-terminus: Ribosome-binding factor A (116 aa).

Belongs to the RbfA family. As to quaternary structure, monomer. Binds 30S ribosomal subunits, but not 50S ribosomal subunits or 70S ribosomes.

The protein resides in the cytoplasm. In terms of biological role, one of several proteins that assist in the late maturation steps of the functional core of the 30S ribosomal subunit. Associates with free 30S ribosomal subunits (but not with 30S subunits that are part of 70S ribosomes or polysomes). Required for efficient processing of 16S rRNA. May interact with the 5'-terminal helix region of 16S rRNA. This chain is Ribosome-binding factor A, found in Streptococcus equi subsp. zooepidemicus (strain H70).